The sequence spans 407 residues: Argininosuccinate synthase (407 aa).

ATP contacts are provided by residues 10–18 and alanine 37; that span reads AYSGGLDTS. Positions 88 and 93 each coordinate L-citrulline. Glycine 118 serves as a coordination point for ATP. Residues threonine 120, asparagine 124, and aspartate 125 each contribute to the L-aspartate site. L-citrulline is bound at residue asparagine 124. L-citrulline is bound by residues arginine 128, serine 180, serine 189, glutamate 265, and tyrosine 277.

Belongs to the argininosuccinate synthase family. Type 1 subfamily. As to quaternary structure, homotetramer.

Its subcellular location is the cytoplasm. It carries out the reaction L-citrulline + L-aspartate + ATP = 2-(N(omega)-L-arginino)succinate + AMP + diphosphate + H(+). It participates in amino-acid biosynthesis; L-arginine biosynthesis; L-arginine from L-ornithine and carbamoyl phosphate: step 2/3. The protein is Argininosuccinate synthase of Alcanivorax borkumensis (strain ATCC 700651 / DSM 11573 / NCIMB 13689 / SK2).